Reading from the N-terminus, the 320-residue chain is Cytochrome f (320 aa).

The first 35 residues, M1–A35, serve as a signal peptide directing secretion. Positions 36, 56, 59, and 60 each coordinate heme. A helical membrane pass occupies residues V286–K306.

Belongs to the cytochrome f family. As to quaternary structure, the 4 large subunits of the cytochrome b6-f complex are cytochrome b6, subunit IV (17 kDa polypeptide, petD), cytochrome f and the Rieske protein, while the 4 small subunits are PetG, PetL, PetM and PetN. The complex functions as a dimer. Requires heme as cofactor.

It is found in the plastid. The protein resides in the chloroplast thylakoid membrane. Its function is as follows. Component of the cytochrome b6-f complex, which mediates electron transfer between photosystem II (PSII) and photosystem I (PSI), cyclic electron flow around PSI, and state transitions. The chain is Cytochrome f from Chloranthus spicatus (Chulantree).